Consider the following 107-residue polypeptide: Integration host factor subunit beta (107 aa).

Residues 56–107 are disordered; that stretch reads RPSRVGRNPKSGEKVLVPEKHVPHFKPGKELRERVDRNAGEPLKADAADDDL. The span at 65–107 shows a compositional bias: basic and acidic residues; sequence KSGEKVLVPEKHVPHFKPGKELRERVDRNAGEPLKADAADDDL.

This sequence belongs to the bacterial histone-like protein family. Heterodimer of an alpha and a beta chain.

Functionally, this protein is one of the two subunits of integration host factor, a specific DNA-binding protein that functions in genetic recombination as well as in transcriptional and translational control. The sequence is that of Integration host factor subunit beta from Paraburkholderia phymatum (strain DSM 17167 / CIP 108236 / LMG 21445 / STM815) (Burkholderia phymatum).